Consider the following 1403-residue polypeptide: Protein FAM135B (1403 aa).

4 disordered regions span residues 445–483, 514–548, 648–669, and 718–740; these read EKNLINQNSSSRKDIPLSTTEAPQLGSDEDVTRRPEVQE, EDECWTGPRPDAVKDSLTDTDICSRSPGPDEGQTP, REALDTKPSQPDHAEEPEDLSA, and RHAHHRNSLEGGHTESNTSLPSG. Over residues 649 to 661 the composition is skewed to basic and acidic residues; the sequence is EALDTKPSQPDHA. A compositionally biased stretch (polar residues) spans 731–740; that stretch reads TESNTSLPSG. Phosphoserine occurs at positions 775 and 776. The disordered stretch occupies residues 790 to 819; that stretch reads TAGFSEDLDPSSKENSPPRHTSLSYGGSRV. Over residues 802 to 814 the composition is skewed to polar residues; sequence KENSPPRHTSLSY.

The protein belongs to the FAM135 family.

The protein is Protein FAM135B (Fam135b) of Mus musculus (Mouse).